The chain runs to 144 residues: Large ribosomal subunit protein uL15 (144 aa).

Basic and acidic residues predominate over residues 1–18 (MRLNDLHPAEGSRPEGKR). The disordered stretch occupies residues 1 to 58 (MRLNDLHPAEGSRPEGKRVGRGIGSGLGKTGGRGHKGQKSRSGGSVKPGFEGGQMPLQ). The span at 21–31 (RGIGSGLGKTG) shows a compositional bias: gly residues.

This sequence belongs to the universal ribosomal protein uL15 family. Part of the 50S ribosomal subunit.

Its function is as follows. Binds to the 23S rRNA. This Alcanivorax borkumensis (strain ATCC 700651 / DSM 11573 / NCIMB 13689 / SK2) protein is Large ribosomal subunit protein uL15.